A 119-amino-acid polypeptide reads, in one-letter code: Large ribosomal subunit protein bL20c (119 aa).

This sequence belongs to the bacterial ribosomal protein bL20 family.

The protein resides in the plastid. Its subcellular location is the chloroplast. In terms of biological role, binds directly to 23S ribosomal RNA and is necessary for the in vitro assembly process of the 50S ribosomal subunit. It is not involved in the protein synthesizing functions of that subunit. The polypeptide is Large ribosomal subunit protein bL20c (Amborella trichopoda).